Consider the following 330-residue polypeptide: Protein ANTHESIS POMOTING FACTOR 1 (330 aa).

WD repeat units lie at residues 22–61 (DFGG…QLKI), 112–151 (GHKD…CQGI), 153–191 (HLRG…KGPF), 198–237 (GDTA…KKCG), 242–281 (PSQG…EVAR), and 284–323 (NNIG…APAD).

The protein belongs to the WD repeat SWD2 family. Expressed in the shoot apical meristem (SAM), embryos, seedlings, cotyledons, leaves primordia, young leaves and roots.

It is found in the nucleus. Component of a chromatin regulatory complex involved in regulating chromatin structure in the nucleus. Promotes flowering under long days (LD) via the regulation of bolting. The sequence is that of Protein ANTHESIS POMOTING FACTOR 1 from Arabidopsis thaliana (Mouse-ear cress).